We begin with the raw amino-acid sequence, 557 residues long: Organic cation/carnitine transporter 2 (557 aa).

Over 1-20 (MRDYDEVTAFLGEWGPFQRL) the chain is Cytoplasmic. A helical membrane pass occupies residues 21–41 (IFFLLSASIIPNGFTGLSSVF). The Extracellular portion of the chain corresponds to 42-142 (LIATPEHRCR…NLVCEDDWKA (101 aa)). N-linked (GlcNAc...) asparagine glycosylation is found at Asn-57, Asn-64, and Asn-91. The helical transmembrane segment at 143-163 (PLTISLFFVGVLLGSFISGQL) threads the bilayer. The Cytoplasmic segment spans residues 164 to 172 (SDRFGRKNV). A helical transmembrane segment spans residues 173 to 193 (LFVTMGMQTGFSFLQIFSKNF). Over 194 to 197 (EMFV) the chain is Extracellular. A helical membrane pass occupies residues 198 to 218 (VLFVLVGMGQISNYVAAFVLG). 218-225 (GTEILGKS) contacts ATP. Topologically, residues 219-232 (TEILGKSVRIIFST) are cytoplasmic. A helical transmembrane segment spans residues 233–253 (LGVCIFYAFGYMVLPLFAYFI). Topologically, residues 254–257 (RDWR) are extracellular. Residues 258–278 (MLLVALTMPGVLCVALWWFIP) traverse the membrane as a helical segment. The Cytoplasmic segment spans residues 279–341 (ESPRWLISQG…LDLLRTWNIR (63 aa)). A helical transmembrane segment spans residues 342–362 (MVTIMSIMLWMTISVGYFGLS). The Extracellular segment spans residues 363–373 (LDTPNLHGDIF). A helical transmembrane segment spans residues 374–394 (VNCFLSAMVEVPAYVLAWLLL). At 395–406 (QYLPRRYSMATA) the chain is on the cytoplasmic side. Residues 407 to 427 (LFLGGSVLLFMQLVPPDLYYL) traverse the membrane as a helical segment. At 428–430 (ATV) the chain is on the extracellular side. Residues 431-451 (LVMVGKFGVTAAFSMVYVYTA) form a helical membrane-spanning segment. Residues 452-462 (ELYPTVVRNMG) are Cytoplasmic-facing. Residues 463-483 (VGVSSTASRLGSILSPYFVYL) traverse the membrane as a helical segment. Residues 484–488 (GAYDR) are Extracellular-facing. Tyr-486 carries the phosphotyrosine modification. The chain crosses the membrane as a helical span at residues 489 to 509 (FLPYILMGSLTILTAILTLFL). The disordered stretch occupies residues 535-557 (TPSHTRMLKDGQERPTILKSTAF). Residue Thr-550 is modified to Phosphothreonine.

The protein belongs to the major facilitator (TC 2.A.1) superfamily. Organic cation transporter (TC 2.A.1.19) family. As to quaternary structure, interacts with PDZK1. In terms of processing, glycosylated. Glycosylation affects the expression levels. Not glycosylated. In terms of tissue distribution, strongly expressed in kidney, skeletal muscle, heart and placenta. Primarily expressed by surface epithelial cells of the colon (at protein level). Expressed in CD68 macrophage and CD43 T-cells but not in CD20 B-cells. In testis, localized to Sertoli cell basal membranes, peritubular myoid cells and Leydig cells.

It localises to the cell membrane. The protein resides in the apical cell membrane. Its subcellular location is the basal cell membrane. The protein localises to the endoplasmic reticulum. The catalysed reaction is (R)-carnitine(out) + Na(+)(out) = (R)-carnitine(in) + Na(+)(in). It catalyses the reaction glycine betaine(out) + Na(+)(out) = glycine betaine(in) + Na(+)(in). It carries out the reaction glycine betaine(out) + (R)-carnitine(in) = glycine betaine(in) + (R)-carnitine(out). The enzyme catalyses O-butanoyl-(R)-carnitine(out) + Na(+)(out) = O-butanoyl-(R)-carnitine(in) + Na(+)(in). The catalysed reaction is O-acetyl-(R)-carnitine(out) + Na(+)(out) = O-acetyl-(R)-carnitine(in) + Na(+)(in). It catalyses the reaction O-propanoyl-(R)-carnitine(out) + Na(+)(out) = O-propanoyl-(R)-carnitine(in) + Na(+)(in). It carries out the reaction (S)-carnitine(out) + Na(+)(out) = (S)-carnitine(in) + Na(+)(in). The enzyme catalyses an O-acyl-(R)-carnitine(out) + Na(+)(out) = an O-acyl-(R)-carnitine(in) + Na(+)(in). The catalysed reaction is L-glutamyl-L-arginyl-glycyl-L-methionyl-L-threonine(out) + Na(+)(out) = L-glutamyl-L-arginyl-glycyl-L-methionyl-L-threonine(in) + Na(+)(in). It catalyses the reaction N,N-dimethylglycine(out) + Na(+)(out) = N,N-dimethylglycine(in) + Na(+)(in). Inhibited by emetine, quinidine and verapamil. The IC(50) of emetine is 4.2 uM. Not inhibited by valproic acid. Transport of (R)-carnitine is stimulated by cholesterol in the plasma membrane. Functionally, sodium-ion dependent, high affinity carnitine transporter. Involved in the active cellular uptake of carnitine. Transports one sodium ion with one molecule of carnitine. Also transports organic cations such as tetraethylammonium (TEA) without the involvement of sodium. Relative uptake activity ratio of carnitine to TEA is 11.3. In intestinal epithelia, transports the quorum-sensing pentapeptide CSF (competence and sporulation factor) from B.subtilis which induces cytoprotective heat shock proteins contributing to intestinal homeostasis. May also contribute to regulate the transport of organic compounds in testis across the blood-testis-barrier. In terms of biological role, retained in the ER, unable to perform carnitine uptake. The protein is Organic cation/carnitine transporter 2 of Homo sapiens (Human).